A 269-amino-acid polypeptide reads, in one-letter code: Seven in absentia homolog 3 (269 aa).

The SIAH-type; degenerate zinc finger occupies 61–132 (GSFHPHHLSH…VVPHLRQIHR (72 aa)). Residues Cys-107, Cys-114, His-126, and His-131 each coordinate Zn(2+).

This sequence belongs to the SINA (Seven in absentia) family.

The protein localises to the mitochondrion. Functionally, negative regulator of PRKN translocation to damaged mitochondria. Acts probably by destabilizing PINK1 protein, hence inhibiting PRKN targeting to dysfunctional depolarized mitochondria. This is Seven in absentia homolog 3 (SIAH3) from Homo sapiens (Human).